The chain runs to 141 residues: ATP synthase epsilon chain (141 aa).

The protein belongs to the ATPase epsilon chain family. F-type ATPases have 2 components, CF(1) - the catalytic core - and CF(0) - the membrane proton channel. CF(1) has five subunits: alpha(3), beta(3), gamma(1), delta(1), epsilon(1). CF(0) has three main subunits: a, b and c.

It is found in the cell inner membrane. Produces ATP from ADP in the presence of a proton gradient across the membrane. The sequence is that of ATP synthase epsilon chain from Pseudomonas fluorescens (strain Pf0-1).